Reading from the N-terminus, the 593-residue chain is tRNA (guanine(26)-N(2))-dimethyltransferase 1 (593 aa).

Residues 9-465 enclose the Trm1 methyltransferase domain; that stretch reads TVIKEGEAEV…APMEIIWDIM (457 aa). Arg-36 provides a ligand contact to S-adenosyl-L-methionine. Residues 56-118 are disordered; sequence AMLSKRARSS…KTAYESARRE (63 aa). 2 stretches are compositionally biased toward basic and acidic residues: residues 68–81 and 88–118; these read VVEK…KEET and DNGK…ARRE. Residues Arg-134, Asp-152, and Val-185 each contribute to the S-adenosyl-L-methionine site. Residues Cys-315, Cys-318, Cys-350, and Cys-353 each coordinate Zn(2+). The interval 546 to 593 is disordered; the sequence is VNGHLNNNHKEAGDEEEEEEEEEPEEDIIEGEPELKRQKTTEDFASTS. The span at 558 to 577 shows a compositional bias: acidic residues; the sequence is GDEEEEEEEEEPEEDIIEGE. Basic and acidic residues predominate over residues 578 to 587; sequence PELKRQKTTE.

Belongs to the class I-like SAM-binding methyltransferase superfamily. Trm1 family.

The catalysed reaction is guanosine(26) in tRNA + 2 S-adenosyl-L-methionine = N(2)-dimethylguanosine(26) in tRNA + 2 S-adenosyl-L-homocysteine + 2 H(+). Functionally, dimethylates a single guanine residue at position 26 of most tRNAs using S-adenosyl-L-methionine as donor of the methyl groups. The chain is tRNA (guanine(26)-N(2))-dimethyltransferase 1 from Arabidopsis thaliana (Mouse-ear cress).